A 392-amino-acid chain; its full sequence is Methylthioribose-1-phosphate isomerase (392 aa).

Asp267 (proton donor) is an active-site residue.

This sequence belongs to the eIF-2B alpha/beta/delta subunits family. MtnA subfamily.

The protein resides in the cytoplasm. Its subcellular location is the nucleus. It carries out the reaction 5-(methylsulfanyl)-alpha-D-ribose 1-phosphate = 5-(methylsulfanyl)-D-ribulose 1-phosphate. It functions in the pathway amino-acid biosynthesis; L-methionine biosynthesis via salvage pathway; L-methionine from S-methyl-5-thio-alpha-D-ribose 1-phosphate: step 1/6. Functionally, catalyzes the interconversion of methylthioribose-1-phosphate (MTR-1-P) into methylthioribulose-1-phosphate (MTRu-1-P). This is Methylthioribose-1-phosphate isomerase from Blastomyces gilchristii (strain SLH14081) (Blastomyces dermatitidis).